Here is a 209-residue protein sequence, read N- to C-terminus: MGKLYVFDHPLIQHKITYIRDKNTGTKDFRELVDEVASLMAFEITRDLPLKDIEIETPVSKATTKVIAGKKLGLIPILRAGLGMVDGILKLIPAAKVGHVGLYRDPKTLQPVEYYVKLPTDVEERDFIVLDPMLATGGSAAEAINSLKKRGAKQIKLMCIVAAPEGVKVVQEEHPDVDIYVAALDEKLNDHGYVVPGLGDAGDRLFGTK.

5-phospho-alpha-D-ribose 1-diphosphate is bound by residues R79, R104, and 131-139 (DPMLATGGS). Uracil-binding positions include V194 and 199–201 (GDA). D200 lines the 5-phospho-alpha-D-ribose 1-diphosphate pocket.

It belongs to the UPRTase family. Mg(2+) is required as a cofactor.

The catalysed reaction is UMP + diphosphate = 5-phospho-alpha-D-ribose 1-diphosphate + uracil. It participates in pyrimidine metabolism; UMP biosynthesis via salvage pathway; UMP from uracil: step 1/1. Its activity is regulated as follows. Allosterically activated by GTP. In terms of biological role, catalyzes the conversion of uracil and 5-phospho-alpha-D-ribose 1-diphosphate (PRPP) to UMP and diphosphate. This Bacillus cereus (strain Q1) protein is Uracil phosphoribosyltransferase.